Here is a 179-residue protein sequence, read N- to C-terminus: Large ribosomal subunit protein uL5 (179 aa).

This sequence belongs to the universal ribosomal protein uL5 family. As to quaternary structure, part of the 50S ribosomal subunit; part of the 5S rRNA/L5/L18/L25 subcomplex. Contacts the 5S rRNA and the P site tRNA. Forms a bridge to the 30S subunit in the 70S ribosome.

Its function is as follows. This is one of the proteins that bind and probably mediate the attachment of the 5S RNA into the large ribosomal subunit, where it forms part of the central protuberance. In the 70S ribosome it contacts protein S13 of the 30S subunit (bridge B1b), connecting the 2 subunits; this bridge is implicated in subunit movement. Contacts the P site tRNA; the 5S rRNA and some of its associated proteins might help stabilize positioning of ribosome-bound tRNAs. In Bacillus cereus (strain Q1), this protein is Large ribosomal subunit protein uL5.